We begin with the raw amino-acid sequence, 1413 residues long: DNA-directed RNA polymerase subunit beta' (1413 aa).

Zn(2+)-binding residues include Cys70, Cys72, Cys85, and Cys88. 3 residues coordinate Mg(2+): Asp460, Asp462, and Asp464. Zn(2+)-binding residues include Cys814, Cys888, Cys895, and Cys898.

Belongs to the RNA polymerase beta' chain family. The RNAP catalytic core consists of 2 alpha, 1 beta, 1 beta' and 1 omega subunit. When a sigma factor is associated with the core the holoenzyme is formed, which can initiate transcription. The cofactor is Mg(2+). Zn(2+) is required as a cofactor.

The enzyme catalyses RNA(n) + a ribonucleoside 5'-triphosphate = RNA(n+1) + diphosphate. In terms of biological role, DNA-dependent RNA polymerase catalyzes the transcription of DNA into RNA using the four ribonucleoside triphosphates as substrates. This chain is DNA-directed RNA polymerase subunit beta', found in Bordetella avium (strain 197N).